A 103-amino-acid chain; its full sequence is MANPLLCPLLTEKSTGLTEKKGQYVLVVRPDADKLTIKDAIEKKFGVSVTSVRTINYLGKLRAQNTRRGRIIGKKSDWKKAIVTLAEGQSIDYYSGTAQKSEG.

It belongs to the universal ribosomal protein uL23 family. Part of the 50S ribosomal subunit. Contacts protein L29, and trigger factor when it is bound to the ribosome.

One of the early assembly proteins it binds 23S rRNA. One of the proteins that surrounds the polypeptide exit tunnel on the outside of the ribosome. Forms the main docking site for trigger factor binding to the ribosome. The polypeptide is Large ribosomal subunit protein uL23 (Chlorobium chlorochromatii (strain CaD3)).